Consider the following 976-residue polypeptide: Metabotropic glutamate receptor (976 aa).

Positions 1–25 (MKQKNNNGTILVVVMVLSWSRVVDL) are cleaved as a signal peptide. Topologically, residues 26–626 (KSPSNTHTQD…IQYMKWNSLF (601 aa)) are extracellular. N-linked (GlcNAc...) asparagine glycans are attached at residues N112 and N143. Residues S158 and 179 to 181 (AST) each bind L-glutamate. The N-linked (GlcNAc...) asparagine glycan is linked to N216. An L-glutamate-binding site is contributed by Y229. N299 carries N-linked (GlcNAc...) asparagine glycosylation. D310 contacts L-glutamate. Residue N386 is glycosylated (N-linked (GlcNAc...) asparagine). K417 is an L-glutamate binding site. N-linked (GlcNAc...) asparagine glycosylation is found at N491 and N524. A helical transmembrane segment spans residues 627–649 (ALIPMAIAIFGIALTSIVIVLFA). Residues 650-663 (KNHDTPLVRASGRE) lie on the Cytoplasmic side of the membrane. Residues 664–684 (LSYTLLFGILVCYCNTFALIA) form a helical membrane-spanning segment. Residues 685 to 695 (KPTIGSCVLQR) lie on the Extracellular side of the membrane. Residues 696-714 (FGIGVGFSIIYSALLTKTN) traverse the membrane as a helical segment. Topologically, residues 715–738 (RISRIFHSASKSAQRLKYISPQSQ) are cytoplasmic. A helical transmembrane segment spans residues 739–759 (VVITTSLIAIQVLITMIWMVV). The Extracellular segment spans residues 760 to 782 (EPPGTRFYYPDRREVILKCKIQD). The chain crosses the membrane as a helical span at residues 783–804 (MSFLFSQLYNMILITICTIYAI). The Cytoplasmic portion of the chain corresponds to 805–817 (KTRKIPENFNESK). The helical transmembrane segment at 818–840 (FIGFTMYTTCIIWLAFVPIYFGT) threads the bilayer. Topologically, residues 841 to 850 (GNSYEVQTTT) are extracellular. A helical transmembrane segment spans residues 851 to 876 (LCISISLSASVALVCLYSPKVYILVF). Over 877-976 (HPDKNVRKLT…VEPICHIVNK (100 aa)) the chain is Cytoplasmic. The segment at 920–946 (LTGGAVGTNASSSTLPTQNSPHLDEAS) is disordered. The span at 927–946 (TNASSSTLPTQNSPHLDEAS) shows a compositional bias: polar residues.

Belongs to the G-protein coupled receptor 3 family. In terms of tissue distribution, expressed in the neurons of the larval CNS from the beginning of the first until the third instar. Expression in the third-instar larval CNS is restricted to a discrete number of somas and projections in the brain lobes and in the ventral ganglion. In the ventral nerve cord, expression is detected both in somas and projections. Expressed in the antennal lobes, the optic lobes, the central complex and the median bundle in the adult CNS.

It is found in the cell membrane. Its function is as follows. G-protein coupled receptor for glutamate. Ligand binding causes a conformation change that triggers signaling via guanine nucleotide-binding proteins (G proteins) and modulates the activity of down-stream effectors. The sequence is that of Metabotropic glutamate receptor (mGluR) from Drosophila melanogaster (Fruit fly).